The following is a 609-amino-acid chain: Tyrosyl-DNA phosphodiesterase 1 (609 aa).

Residues M1 to I12 show a composition bias toward polar residues. A disordered region spans residues M1–I155. A Phosphoserine modification is found at S61. The span at Q105–S118 shows a compositional bias: basic and acidic residues. A phosphoserine mark is found at S119 and S132. At T148 the chain carries Phosphothreonine. S149 carries the phosphoserine modification. H264 (nucleophile) is an active-site residue. K266 provides a ligand contact to substrate. Positions S401–S404 are interaction with DNA. H494 functions as the Proton donor/acceptor in the catalytic mechanism. Residue K496 coordinates substrate.

The protein belongs to the tyrosyl-DNA phosphodiesterase family. Monomer. In terms of tissue distribution, ubiquitous.

It is found in the nucleus. It localises to the cytoplasm. In terms of biological role, DNA repair enzyme that can remove a variety of covalent adducts from DNA through hydrolysis of a 3'-phosphodiester bond, giving rise to DNA with a free 3' phosphate. Catalyzes the hydrolysis of dead-end complexes between DNA and the topoisomerase I active site tyrosine residue. Hydrolyzes 3'-phosphoglycolates on protruding 3' ends on DNA double-strand breaks due to DNA damage by radiation and free radicals. Acts on blunt-ended double-strand DNA breaks and on single-stranded DNA. Has low 3'exonuclease activity and can remove a single nucleoside from the 3'end of DNA and RNA molecules with 3'hydroxyl groups. Has no exonuclease activity towards DNA or RNA with a 3'phosphate. The chain is Tyrosyl-DNA phosphodiesterase 1 (Tdp1) from Mus musculus (Mouse).